A 372-amino-acid polypeptide reads, in one-letter code: Non-structural protein NS2 (372 aa).

The segment at 259–326 (NQIEKQHTTH…QESEPESPSF (68 aa)) is disordered. A compositionally biased stretch (low complexity) spans 299-309 (TETTSTSSSHH).

This Aedes albopictus (Asian tiger mosquito) protein is Non-structural protein NS2 (NS).